We begin with the raw amino-acid sequence, 256 residues long: Thiazole synthase (256 aa).

Lys-95 functions as the Schiff-base intermediate with DXP in the catalytic mechanism. 1-deoxy-D-xylulose 5-phosphate-binding positions include Gly-156, 182–183 (AG), and 204–205 (NT).

Belongs to the ThiG family. In terms of assembly, homotetramer. Forms heterodimers with either ThiH or ThiS.

Its subcellular location is the cytoplasm. It catalyses the reaction [ThiS sulfur-carrier protein]-C-terminal-Gly-aminoethanethioate + 2-iminoacetate + 1-deoxy-D-xylulose 5-phosphate = [ThiS sulfur-carrier protein]-C-terminal Gly-Gly + 2-[(2R,5Z)-2-carboxy-4-methylthiazol-5(2H)-ylidene]ethyl phosphate + 2 H2O + H(+). Its pathway is cofactor biosynthesis; thiamine diphosphate biosynthesis. Catalyzes the rearrangement of 1-deoxy-D-xylulose 5-phosphate (DXP) to produce the thiazole phosphate moiety of thiamine. Sulfur is provided by the thiocarboxylate moiety of the carrier protein ThiS. In vitro, sulfur can be provided by H(2)S. The polypeptide is Thiazole synthase (Escherichia coli O45:K1 (strain S88 / ExPEC)).